Reading from the N-terminus, the 487-residue chain is 6-phosphogluconate dehydrogenase, decarboxylating 3, chloroplastic (487 aa).

Residue Met1 is modified to N-acetylmethionine. Residues Gly13–Gly18, Asn36–Thr38, Val80–Ala82, and Asn108 contribute to the NADP(+) site. Residues Asn108 and Ser134 to Gly136 contribute to the substrate site. The active-site Proton acceptor is the Lys188. Substrate is bound at residue His191–Asn192. Glu195 serves as the catalytic Proton donor. Tyr196, Lys266, Arg293, Arg458, and His464 together coordinate substrate.

This sequence belongs to the 6-phosphogluconate dehydrogenase family. As to quaternary structure, forms homodimer. Forms heterodimers with PGD1 or PGD2.

It is found in the plastid. The protein localises to the chloroplast. It localises to the cytoplasm. Its subcellular location is the cytosol. It carries out the reaction 6-phospho-D-gluconate + NADP(+) = D-ribulose 5-phosphate + CO2 + NADPH. It participates in carbohydrate degradation; pentose phosphate pathway; D-ribulose 5-phosphate from D-glucose 6-phosphate (oxidative stage): step 3/3. Catalyzes the oxidative decarboxylation of 6-phosphogluconate to ribulose 5-phosphate and CO(2), with concomitant reduction of NADP to NADPH. The protein is 6-phosphogluconate dehydrogenase, decarboxylating 3, chloroplastic of Arabidopsis thaliana (Mouse-ear cress).